The primary structure comprises 302 residues: Oxygen-dependent coproporphyrinogen-III oxidase (302 aa).

Substrate is bound at residue S94. H98 and H108 together coordinate a divalent metal cation. The active-site Proton donor is H108. 110-112 (NVR) contributes to the substrate binding site. Residues H147 and H177 each coordinate a divalent metal cation. The segment at 242–277 (YVEFNLVYDRGTLFGLQTGGRTESILMSMPPLVRWQ) is important for dimerization. 260–262 (GGR) serves as a coordination point for substrate.

Belongs to the aerobic coproporphyrinogen-III oxidase family. In terms of assembly, homodimer. It depends on a divalent metal cation as a cofactor.

It localises to the cytoplasm. The catalysed reaction is coproporphyrinogen III + O2 + 2 H(+) = protoporphyrinogen IX + 2 CO2 + 2 H2O. It functions in the pathway porphyrin-containing compound metabolism; protoporphyrin-IX biosynthesis; protoporphyrinogen-IX from coproporphyrinogen-III (O2 route): step 1/1. Involved in the heme biosynthesis. Catalyzes the aerobic oxidative decarboxylation of propionate groups of rings A and B of coproporphyrinogen-III to yield the vinyl groups in protoporphyrinogen-IX. This is Oxygen-dependent coproporphyrinogen-III oxidase from Shewanella sp. (strain ANA-3).